The following is a 629-amino-acid chain: Chaperone protein HtpG (629 aa).

Positions 1 to 343 (MQKQTLSFQA…SSDLPLNVSR (343 aa)) are a; substrate-binding. The interval 344 to 558 (ELLQESRAVK…DGDMSTQLAR (215 aa)) is b. The segment at 559-629 (MLKQAGQTVP…YVRRVNALLV (71 aa)) is c.

It belongs to the heat shock protein 90 family. Homodimer.

The protein resides in the cytoplasm. Functionally, molecular chaperone. Has ATPase activity. The sequence is that of Chaperone protein HtpG from Polaromonas naphthalenivorans (strain CJ2).